The chain runs to 1773 residues: Zinc finger CCCH domain-containing protein 19 (1773 aa).

Residues 145–166 (SGDRLEENKEVSMEEEPSSHEL) are disordered. A compositionally biased stretch (basic and acidic residues) spans 147–156 (DRLEENKEVS). Residues 196–218 (GEEIESDLESKKEKVDVIEEETT) are a coiled coil. Disordered regions lie at residues 270–290 (IGEG…DVTE), 361–409 (DVDK…AGQT), and 434–591 (ISEM…KTVK). 2 stretches are compositionally biased toward basic and acidic residues: residues 273 to 286 (GAKD…KEGV) and 361 to 378 (DVDK…HVPE). Residues 403–437 (AEEAGQTVDLEEIREENQELSKELAQVDETKISEM) are a coiled coil. 2 stretches are compositionally biased toward basic and acidic residues: residues 444–455 (MIKDEDQEKDDN) and 497–513 (KVDR…TDTR). Acidic residues-rich tracts occupy residues 514–529 (IEDE…TDVA) and 551–572 (EEMT…EVEE). Residues 578–588 (GGKRKRGRNTK) are compositionally biased toward basic residues. The Nuclear localization signal 1 signature appears at 581–588 (RKRGRNTK). The PHD-type zinc finger occupies 599–665 (EDVCFMCFDG…TYLCYTCMFS (67 aa)). Over residues 741–751 (AKRPLKGHETN) the composition is skewed to basic and acidic residues. The segment at 741–797 (AKRPLKGHETNASKQGTASETDYVTDGGSDSDSSPKKRKTRSRSKSGSAEKILSSGD) is disordered. Residues 752–762 (ASKQGTASETD) are compositionally biased toward polar residues. In terms of domain architecture, SWIB/MDM2 spans 801 to 884 (SDETMEWASK…LNLLDSHFLK (84 aa)). A compositionally biased stretch (basic and acidic residues) spans 903–919 (PNHVDVDENLDHPVKSG). A disordered region spans residues 903 to 935 (PNHVDVDENLDHPVKSGKDKKRKTRKKNVRKGR). The span at 920 to 935 (KDKKRKTRKKNVRKGR) shows a compositional bias: basic residues. Residues 921–928 (DKKRKTRK) carry the Nuclear localization signal 2 motif. In terms of domain architecture, Plus3 spans 944–1076 (AVDMHNINLI…KAIALQEVRV (133 aa)). Residues 1139–1152 (EEIPEIHADPKMDP) show a composition bias toward basic and acidic residues. A disordered region spans residues 1139-1274 (EEIPEIHADP…PETPARSSRA (136 aa)). Residues 1153–1163 (DCESEDEDEKE) are compositionally biased toward acidic residues. Over residues 1193–1212 (FSSNESWTGTSNYSNTSANR) the composition is skewed to polar residues. S1281 bears the Phosphoserine mark. Residues 1307–1361 (EKIWHYKDPSGKVQGPFSMAQLRKWNNTGYFPAKLEIWKANESPLDSVLLTDALA) enclose the GYF domain. Composition is skewed to polar residues over residues 1409–1433 (RNSQ…TTPT), 1441–1469 (SRWS…QSQT), 1499–1509 (VSVNHSATLHS), and 1518–1528 (SWGSMQTDHGG). 3 disordered regions span residues 1409-1469 (RNSQ…QSQT), 1485-1605 (QPQT…SWGQ), and 1649-1746 (GQTQ…QQNN). Low complexity predominate over residues 1529–1555 (SNTPSSQNNSTSYGTPSPSVLPSQSQP). Polar residues predominate over residues 1569-1579 (SQPNAQAQAQW). Composition is skewed to low complexity over residues 1585-1602 (NNNQ…QNSS) and 1666-1677 (QSQSQSQVQAQA). Residues 1678-1708 (GTTGSGWMQPGQGIQSGNSNQNWGTQNQTAI) are compositionally biased toward polar residues. Residues 1722–1735 (GNQQQSQNGDSGYG) are compositionally biased toward low complexity. Residues 1737–1746 (NRQSGGQQNN) show a composition bias toward polar residues. The segment at 1747 to 1773 (FKGQRVCKFFRENGHCRKGASCNYLHN) adopts a C3H1-type zinc-finger fold.

As to quaternary structure, interacts with unmethylated histone H3 and AGO2. The interaction with AGO2 in required to direct DNA methylation and silencing. Expressed in seedlings, mostly in the vasculature and shoot apices of young seedlings.

Its subcellular location is the nucleus. Functionally, plays a central role in integrating RNA silencing and chromatin signals in 21 nt siRNA-dependent DNA methylation on cytosine pathway leading to transcriptional gene silencing of specific sequences. Involved in a chromatin-based RNA silencing pathway that encompasses both post-transcriptional gene silencing (PTGS) (e.g. RDR1, RDR6 and AGO2) and transcriptional gene silencing (TGS) (e.g. siRNA-dependent DNA methylation and histone H3) components. Mediates siRNA accumulation at specific chromatin loci. Binds H3K4me0 through its PHD to enforce low levels of H3K4 methylation and gene silencing at a subset of genomic loci. The sequence is that of Zinc finger CCCH domain-containing protein 19 (NERD) from Arabidopsis thaliana (Mouse-ear cress).